Consider the following 304-residue polypeptide: N-acetyl-D-glucosamine kinase (304 aa).

Residues 4 to 11 (GFDMGGTK) and 133 to 140 (GVGGGLIV) contribute to the ATP site. Zn(2+) contacts are provided by H157, C177, C179, and C184.

This sequence belongs to the ROK (NagC/XylR) family. NagK subfamily.

The enzyme catalyses N-acetyl-D-glucosamine + ATP = N-acetyl-D-glucosamine 6-phosphate + ADP + H(+). The protein operates within cell wall biogenesis; peptidoglycan recycling. In terms of biological role, catalyzes the phosphorylation of N-acetyl-D-glucosamine (GlcNAc) derived from cell-wall degradation, yielding GlcNAc-6-P. This chain is N-acetyl-D-glucosamine kinase, found in Yersinia pseudotuberculosis serotype IB (strain PB1/+).